A 361-amino-acid polypeptide reads, in one-letter code: 3-dehydroquinate synthase (361 aa).

NAD(+)-binding positions include 105–109 (GVIGD), 129–130 (TT), K142, K151, and 169–172 (FLST). The Zn(2+) site is built by E184, H247, and H264.

The protein belongs to the sugar phosphate cyclases superfamily. Dehydroquinate synthase family. Co(2+) is required as a cofactor. The cofactor is Zn(2+). It depends on NAD(+) as a cofactor.

It is found in the cytoplasm. The catalysed reaction is 7-phospho-2-dehydro-3-deoxy-D-arabino-heptonate = 3-dehydroquinate + phosphate. The protein operates within metabolic intermediate biosynthesis; chorismate biosynthesis; chorismate from D-erythrose 4-phosphate and phosphoenolpyruvate: step 2/7. In terms of biological role, catalyzes the conversion of 3-deoxy-D-arabino-heptulosonate 7-phosphate (DAHP) to dehydroquinate (DHQ). The polypeptide is 3-dehydroquinate synthase (Endomicrobium trichonymphae).